Here is a 419-residue protein sequence, read N- to C-terminus: S-adenosylmethionine synthase (419 aa).

His-14 is a binding site for ATP. A Mg(2+)-binding site is contributed by Asp-16. K(+) is bound at residue Glu-42. Positions 55 and 98 each coordinate L-methionine. The interval 98 to 108 (QSADINQGVDR) is flexible loop. Residues 164–166 (DAK), 242–243 (KF), Asp-251, 257–258 (RK), Ala-274, and Lys-278 contribute to the ATP site. Asp-251 contributes to the L-methionine binding site. Lys-282 provides a ligand contact to L-methionine.

This sequence belongs to the AdoMet synthase family. As to quaternary structure, homotetramer; dimer of dimers. Mg(2+) is required as a cofactor. K(+) serves as cofactor.

Its subcellular location is the cytoplasm. The enzyme catalyses L-methionine + ATP + H2O = S-adenosyl-L-methionine + phosphate + diphosphate. It functions in the pathway amino-acid biosynthesis; S-adenosyl-L-methionine biosynthesis; S-adenosyl-L-methionine from L-methionine: step 1/1. In terms of biological role, catalyzes the formation of S-adenosylmethionine (AdoMet) from methionine and ATP. The overall synthetic reaction is composed of two sequential steps, AdoMet formation and the subsequent tripolyphosphate hydrolysis which occurs prior to release of AdoMet from the enzyme. This is S-adenosylmethionine synthase from Cytophaga hutchinsonii (strain ATCC 33406 / DSM 1761 / CIP 103989 / NBRC 15051 / NCIMB 9469 / D465).